Consider the following 118-residue polypeptide: Large ribosomal subunit protein uL18 (118 aa).

It belongs to the universal ribosomal protein uL18 family. Part of the 50S ribosomal subunit; part of the 5S rRNA/L5/L18/L25 subcomplex. Contacts the 5S and 23S rRNAs.

Functionally, this is one of the proteins that bind and probably mediate the attachment of the 5S RNA into the large ribosomal subunit, where it forms part of the central protuberance. This chain is Large ribosomal subunit protein uL18, found in Rickettsia felis (strain ATCC VR-1525 / URRWXCal2) (Rickettsia azadi).